A 329-amino-acid chain; its full sequence is GDP-mannose transporter (329 aa).

Residues 1 to 13 (MSELKVDTGRLSH) lie on the Cytoplasmic side of the membrane. A helical membrane pass occupies residues 14 to 34 (IANSGPMSILAYCASSILMTV). Topologically, residues 35–44 (TNKCVVGSDK) are lumenal. Residues 45–65 (FNMLFVMLFAQSLVCVTALVL) traverse the membrane as a helical segment. Over 66–79 (LKALGYVQYRPLNK) the chain is Cytoplasmic. Residues 80-100 (VDVKNWLLISVLLVLMTYTSS) form a helical membrane-spanning segment. Over 101–109 (RALKYLAVP) the chain is Lumenal. The chain crosses the membrane as a helical span at residues 110-130 (IYTIFKNLTIILIAYGEVLFF). Over 131–133 (GGR) the chain is Cytoplasmic. A helical transmembrane segment spans residues 134 to 154 (VTAMELSSFLLIVLSSVVATL). Over 155 to 174 (GDQQALAKKPLAAAVESILG) the chain is Lumenal. Residues 175–195 (LNVGYFWMFTNCICSALFVLI) form a helical membrane-spanning segment. At 196–214 (MRKRIALTKFKDFDTMFYN) the chain is on the cytoplasmic side. The helical transmembrane segment at 215–235 (NILSLPLLMLASFMFEDWGAA) threads the bilayer. At 236 to 245 (NIARNLTKDY) the chain is on the lumenal side. Residue asparagine 240 is glycosylated (N-linked (GlcNAc...) asparagine). Residues 246–266 (IIIMIISGLASVGISYCSGWC) form a helical membrane-spanning segment. Residues 267 to 273 (VRVTSST) are Cytoplasmic-facing. The chain crosses the membrane as a helical span at residues 274 to 294 (TYSMVGALNKLPIALSGLLFF). Topologically, residues 295-298 (DAPK) are lumenal. Residues 299–319 (NFLSIFSIFLGFLSGIVYAVA) form a helical membrane-spanning segment. Over 320–329 (KQKKQSQPAN) the chain is Cytoplasmic.

The protein belongs to the TPT transporter family. SLC35D subfamily. In terms of assembly, homooligomer.

It is found in the golgi apparatus membrane. The protein localises to the cytoplasmic vesicle membrane. Its subcellular location is the endoplasmic reticulum membrane. Its function is as follows. Involved in the import of GDP-mannose from the cytoplasm into the Golgi lumen. The protein is GDP-mannose transporter (VRG4) of Eremothecium gossypii (strain ATCC 10895 / CBS 109.51 / FGSC 9923 / NRRL Y-1056) (Yeast).